A 272-amino-acid chain; its full sequence is NH(3)-dependent NAD(+) synthetase (272 aa).

Glycine 45–serine 52 contributes to the ATP binding site. Aspartate 51 lines the Mg(2+) pocket. Arginine 138 is a deamido-NAD(+) binding site. Threonine 158 provides a ligand contact to ATP. Glutamate 163 is a binding site for Mg(2+). Deamido-NAD(+) contacts are provided by lysine 171 and aspartate 178. ATP is bound by residues lysine 187 and threonine 209. Residue histidine 258–lysine 259 coordinates deamido-NAD(+).

This sequence belongs to the NAD synthetase family. In terms of assembly, homodimer.

It catalyses the reaction deamido-NAD(+) + NH4(+) + ATP = AMP + diphosphate + NAD(+) + H(+). It participates in cofactor biosynthesis; NAD(+) biosynthesis; NAD(+) from deamido-NAD(+) (ammonia route): step 1/1. Its function is as follows. Catalyzes the ATP-dependent amidation of deamido-NAD to form NAD. Uses ammonia as a nitrogen source. In Bacillus cereus (strain 03BB102), this protein is NH(3)-dependent NAD(+) synthetase.